Here is a 192-residue protein sequence, read N- to C-terminus: Ribosome maturation factor RimM (192 aa).

Positions 115-189 (EGEYYLSDLI…RIEITPPKGL (75 aa)) constitute a PRC barrel domain.

Belongs to the RimM family. As to quaternary structure, binds ribosomal protein uS19.

Its subcellular location is the cytoplasm. In terms of biological role, an accessory protein needed during the final step in the assembly of 30S ribosomal subunit, possibly for assembly of the head region. Essential for efficient processing of 16S rRNA. May be needed both before and after RbfA during the maturation of 16S rRNA. It has affinity for free ribosomal 30S subunits but not for 70S ribosomes. The protein is Ribosome maturation factor RimM of Acaryochloris marina (strain MBIC 11017).